Consider the following 435-residue polypeptide: Glutamate-1-semialdehyde 2,1-aminomutase (435 aa).

N6-(pyridoxal phosphate)lysine is present on Lys266.

The protein belongs to the class-III pyridoxal-phosphate-dependent aminotransferase family. HemL subfamily. As to quaternary structure, homodimer. Requires pyridoxal 5'-phosphate as cofactor.

The protein resides in the cytoplasm. It carries out the reaction (S)-4-amino-5-oxopentanoate = 5-aminolevulinate. The protein operates within porphyrin-containing compound metabolism; protoporphyrin-IX biosynthesis; 5-aminolevulinate from L-glutamyl-tRNA(Glu): step 2/2. The chain is Glutamate-1-semialdehyde 2,1-aminomutase from Coxiella burnetii (strain Dugway 5J108-111).